A 238-amino-acid polypeptide reads, in one-letter code: Hydatid disease diagnostic antigen P-29 (238 aa).

One can recognise a BAR domain in the interval 18–238 (GELVNKNEKT…AKECSMMLGE (221 aa)).

The chain is Hydatid disease diagnostic antigen P-29 from Echinococcus granulosus (Hydatid tapeworm).